Here is a 157-residue protein sequence, read N- to C-terminus: SsrA-binding protein (157 aa).

It belongs to the SmpB family.

The protein resides in the cytoplasm. In terms of biological role, required for rescue of stalled ribosomes mediated by trans-translation. Binds to transfer-messenger RNA (tmRNA), required for stable association of tmRNA with ribosomes. tmRNA and SmpB together mimic tRNA shape, replacing the anticodon stem-loop with SmpB. tmRNA is encoded by the ssrA gene; the 2 termini fold to resemble tRNA(Ala) and it encodes a 'tag peptide', a short internal open reading frame. During trans-translation Ala-aminoacylated tmRNA acts like a tRNA, entering the A-site of stalled ribosomes, displacing the stalled mRNA. The ribosome then switches to translate the ORF on the tmRNA; the nascent peptide is terminated with the 'tag peptide' encoded by the tmRNA and targeted for degradation. The ribosome is freed to recommence translation, which seems to be the essential function of trans-translation. The polypeptide is SsrA-binding protein (Clostridium novyi (strain NT)).